The primary structure comprises 272 residues: Acyl-[acyl-carrier-protein]--UDP-N-acetylglucosamine O-acyltransferase (272 aa).

It belongs to the transferase hexapeptide repeat family. LpxA subfamily. As to quaternary structure, homotrimer.

The protein localises to the cytoplasm. It catalyses the reaction a (3R)-hydroxyacyl-[ACP] + UDP-N-acetyl-alpha-D-glucosamine = a UDP-3-O-[(3R)-3-hydroxyacyl]-N-acetyl-alpha-D-glucosamine + holo-[ACP]. It functions in the pathway glycolipid biosynthesis; lipid IV(A) biosynthesis; lipid IV(A) from (3R)-3-hydroxytetradecanoyl-[acyl-carrier-protein] and UDP-N-acetyl-alpha-D-glucosamine: step 1/6. Involved in the biosynthesis of lipid A, a phosphorylated glycolipid that anchors the lipopolysaccharide to the outer membrane of the cell. This chain is Acyl-[acyl-carrier-protein]--UDP-N-acetylglucosamine O-acyltransferase, found in Rhizobium johnstonii (strain DSM 114642 / LMG 32736 / 3841) (Rhizobium leguminosarum bv. viciae).